We begin with the raw amino-acid sequence, 283 residues long: MTGPSAAGRAGTADNVVGVEVTIDGMLVIADRLHLVDFPVTLGIRPNIPQEDLRDIVWEQVQRDLTAQGVLDLHGEPQPTVAEMVETLGRPDRTLEGRWWRRDIGGVMVRFVVCRRGDRHVIAARDGDMLVLQLVAPQVGLAGMVTAVLGPAEPANVEPLTGVATELAECTTASQLTQYGIAPASARVYAEIVGNPTGWVEIVASQRHPGGTTTQTDAAAGVLDSKLGRLVSLPRRVGGDLYGSFLPGTQQNLERALDGLLELLPAGAWLDHTSDHAQASSRG.

Belongs to the EspG family. Interacts specifically with ESX-1-dependent PE/PPE proteins. Interacts with PPE68.

It localises to the cytoplasm. In terms of biological role, specific chaperone for cognate PE/PPE proteins. Plays an important role in preventing aggregation of PE/PPE dimers. This Mycobacterium tuberculosis (strain ATCC 25618 / H37Rv) protein is ESX-1 secretion-associated protein EspG1.